The following is a 273-amino-acid chain: DnaJ homolog subfamily C member 27 (273 aa).

GTP contacts are provided by residues 23 to 30 (GNAEVGKS), 71 to 75 (DMAGH), and 134 to 137 (NKID). Residues 217 to 273 (DSWDMLGVKPGATRDEVNKAYRKLAVLLHPDKCVAPGSEDAFKAVVNARTALLKNIK) form the J domain.

Belongs to the small GTPase superfamily. Rab family.

It localises to the nucleus. In terms of biological role, GTPase possibly involved in regulation of the MEK/ERK pathway. The protein is DnaJ homolog subfamily C member 27 (DNAJC27) of Gallus gallus (Chicken).